The chain runs to 203 residues: Thymidylate kinase (203 aa).

7–14 (GPDGSGKS) lines the ATP pocket.

Belongs to the thymidylate kinase family.

The catalysed reaction is dTMP + ATP = dTDP + ADP. Its function is as follows. Phosphorylation of dTMP to form dTDP in both de novo and salvage pathways of dTTP synthesis. This chain is Thymidylate kinase, found in Finegoldia magna (strain ATCC 29328 / DSM 20472 / WAL 2508) (Peptostreptococcus magnus).